The sequence spans 535 residues: Cytochrome P450 monooxygenase claP (535 aa).

Transmembrane regions (helical) follow at residues 7-27 (IGTLDVLIFLVFLWLLSKLVG) and 225-245 (YFSMVIFLLAQVFPILLKLPT). Position 472 (Cys-472) interacts with heme.

Belongs to the cytochrome P450 family. The cofactor is heme.

The protein localises to the membrane. The protein operates within secondary metabolite biosynthesis; terpenoid biosynthesis. Functionally, cytochrome P450 monooxygenase; part of the gene cluster that mediates the biosynthesis of clavilactone A, a meroterpenoid that features a unique benzo-fused ten-membered carbocyclic ring unit with an alpha,beta-epoxy-gamma-lactone moiety, forming an intriguing 10/5/3 tricyclic nested skeleton. Cytochrome P450 monooxygenases claO, claP, claQ, claU, and claW are close orthologs, suggesting that a redundant function or pseudogenes are present in the cla cluster. These monoxygenases are not involved in clavilactone A biosynthesis nor its modification. ClaR, ClaS and ClaT are sufficient to produce clavilactone A. The biosynthesis begins with the prenyltransferase claS that transfers geranyl pyrophosphate (GPP) to hydroquinone to produces geranylhydroquinone. The cytochrome P450 monooxygenase claR then catalyzes the diradical coupling reaction between the intramolecular hydroquinone and allyl moieties to form the benzo-fused ten-membered carbocyclic ring unit of wigantol. Finally the cytochrome P450 monooxygenase claT exquisitely and stereoselectively assembles the alpha,beta-epoxy-gamma-lactone moiety, producing clavilactone A via arnebinol A. This Ampulloclitocybe clavipes (Club foot) protein is Cytochrome P450 monooxygenase claP.